Consider the following 213-residue polypeptide: 5-deoxy-D-ribulose 1-phosphate aldolase (213 aa).

Residues 28 to 29 (GN), 45 to 46 (SG), and 74 to 76 (SSE) contribute to the substrate site. Catalysis depends on E76, which acts as the Proton donor/acceptor. E76, H95, H97, and H157 together coordinate Mn(2+).

The protein belongs to the aldolase class II family. In terms of assembly, forms homooligomers, possibly homotetramers. Mn(2+) serves as cofactor.

The catalysed reaction is 5-deoxy-D-ribulose 1-phosphate = dihydroxyacetone phosphate + acetaldehyde. It functions in the pathway carbohydrate degradation. In terms of biological role, catalyzes the cleavage of 5-deoxy-D-ribulose 1-phosphate to yield dihydroxyacetone phosphate (DHAP) and acetaldehyde, as part of a 5-deoxyribose salvage pathway that recycles this toxic radical SAM enzyme by-product to mainstream metabolites. Is also able to catalyze the reverse reaction, using several aldehydes as substrate, with acetaldehyde being the preferred substrate. The chain is 5-deoxy-D-ribulose 1-phosphate aldolase from Bacillus thuringiensis serovar kurstaki (strain ATCC 35866 / NRRL B-4488 / HD73).